The primary structure comprises 177 residues: Large ribosomal subunit protein uL6 (177 aa).

Belongs to the universal ribosomal protein uL6 family. As to quaternary structure, part of the 50S ribosomal subunit.

This protein binds to the 23S rRNA, and is important in its secondary structure. It is located near the subunit interface in the base of the L7/L12 stalk, and near the tRNA binding site of the peptidyltransferase center. This chain is Large ribosomal subunit protein uL6, found in Pseudomonas paraeruginosa (strain DSM 24068 / PA7) (Pseudomonas aeruginosa (strain PA7)).